We begin with the raw amino-acid sequence, 189 residues long: Putative manganese efflux pump MntP (189 aa).

The next 6 membrane-spanning stretches (helical) occupy residues 2–22, 36–56, 71–91, 106–126, 132–152, and 167–187; these read SLTELILLAIGLSMDASAVSI, ILQMAVMFAVFQGIMPLIGYY, WIAFILLVIIGGKMIHESITA, LLLVQAVATSIDALAVGVSLS, ILYSITIIGIVTFICCTAAIL, and IVGGLILVGIGVKIFVQHMFF.

The protein belongs to the MntP (TC 9.B.29) family.

Its subcellular location is the cell membrane. In terms of biological role, probably functions as a manganese efflux pump. This is Putative manganese efflux pump MntP from Ruminiclostridium cellulolyticum (strain ATCC 35319 / DSM 5812 / JCM 6584 / H10) (Clostridium cellulolyticum).